The chain runs to 156 residues: Arginine repressor (156 aa).

It belongs to the ArgR family.

The protein resides in the cytoplasm. Its pathway is amino-acid biosynthesis; L-arginine biosynthesis [regulation]. In terms of biological role, regulates arginine biosynthesis genes. The polypeptide is Arginine repressor (Citrobacter koseri (strain ATCC BAA-895 / CDC 4225-83 / SGSC4696)).